Reading from the N-terminus, the 2070-residue chain is MLEAIDKNRALHAAERLQTKLRERGDVANEDKLSLLKSVLQSPLFSQILSLQTSVQQLKDQVNIATSATSNIEYAHVPHLSPAVIPTLQNESFLLSPNNGNLEALTGPGIPHINGKPACDEFDQLIKNMAQGRHVEVFELLKPPSGGLGFSVVGLRSENRGELGIFVQEIQEGSVAHRDGRLKETDQILAINGQALDQTITHQQAISILQKAKDTVQLVIARGSLPQLVSPIVSRSPSAASTISAHSNPVHWQHMETIELVNDGSGLGFGIIGGKATGVIVKTILPGGVADQHGRLCSGDHILKIGDTDLAGMSSEQVAQVLRQCGNRVKLMIARGAIEERTAPTALGITLSSSPTSTPELRVDASTQKGEESETFDVELTKNVQGLGITIAGYIGDKKLEPSGIFVKSITKSSAVEHDGRIQIGDQIIAVDGTNLQGFTNQQAVEVLRHTGQTVLLTLMRRGMKQEAELMSREDVTKDADLSPVNASIIKENYEKDEDFLSSTRNTNILPTEEEGYPLLSAEIEEIEDAQKQEAALLTKWQRIMGINYEIVVAHVSKFSENSGLGISLEATVGHHFIRSVLPEGPVGHSGKLFSGDELLEVNGITLLGENHQDVVNILKELPIEVTMVCCRRTVPPTTQSELDSLDLCDIELTEKPHVDLGEFIGSSETEDPVLAMTDAGQSTEEVQAPLAMWEAGIQHIELEKGSKGLGFSILDYQDPIDPASTVIIIRSLVPGGIAEKDGRLLPGDRLMFVNDVNLENSSLEEAVEALKGAPSGTVRIGVAKPLPLSPEEGYVSAKEDSFLYPPHSCEEAGLADKPLFRADLALVGTNDADLVDESTFESPYSPENDSIYSTQASILSLHGSSCGDGLNYGSSLPSSPPKDVIENSCDPVLDLHMSLEELYTQNLLQRQDENTPSVDISMGPASGFTINDYTPANAIEQQYECENTIVWTESHLPSEVISSAELPSVLPDSAGKGSEYLLEQSSLACNAECVMLQNVSKESFERTINIAKGNSSLGMTVSANKDGLGMIVRSIIHGGAISRDGRIAIGDCILSINEESTISVTNAQARAMLRRHSLIGPDIKITYVPAEHLEEFKISLGQQSGRVMALDIFSSYTGRDIPELPEREEGEGEESELQNTAYSNWNQPRRVELWREPSKSLGISIVGGRGMGSRLSNGEVMRGIFIKHVLEDSPAGKNGTLKPGDRIVEVDGMDLRDASHEQAVEAIRKAGNPVVFMVQSIINRPRKSPLPSLLHNLYPKYNFSSTNPFADSLQINADKAPSQSESEPEKAPLCSVPPPPPSAFAEMGSDHTQSSASKISQDVDKEDEFGYSWKNIRERYGTLTGELHMIELEKGHSGLGLSLAGNKDRSRMSVFIVGIDPNGAAGKDGRLQIADELLEINGQILYGRSHQNASSIIKCAPSKVKIIFIRNKDAVNQMAVCPGNAVEPLPSNSENLQNKETEPTVTTSDAAVDLSSFKNVQHLELPKDQGGLGIAISEEDTLSGVIIKSLTEHGVAATDGRLKVGDQILAVDDEIVVGYPIEKFISLLKTAKMTVKLTIHAENPDSQAVPSAAGAASGEKKNSSQSLMVPQSGSPEPESIRNTSRSSTPAIFASDPATCPIIPGCETTIEISKGRTGLGLSIVGGSDTLLGAIIIHEVYEEGAACKDGRLWAGDQILEVNGIDLRKATHDEAINVLRQTPQRVRLTLYRDEAPYKEEEVCDTLTIELQKKPGKGLGLSIVGKRNDTGVFVSDIVKGGIADADGRLMQGDQILMVNGEDVRNATQEAVAALLKCSLGTVTLEVGRIKAGPFHSERRPSQSSQVSEGSLSSFTFPLSGSSTSESLESSSKKNALASEIQGLRTVEMKKGPTDSLGISIAGGVGSPLGDVPIFIAMMHPTGVAAQTQKLRVGDRIVTICGTSTEGMTHTQAVNLLKNASGSIEMQVVAGGDVSVVTGHQQEPASSSLSFTGLTSSSIFQDDLGPPQCKSITLERGPDGLGFSIVGGYGSPHGDLPIYVKTVFAKGAASEDGRLKRGDQIIAVNGQSLEGVTHEEAVAILKRTKGTVTLMVLS.

Positions 1-63 constitute an L27 domain; the sequence is MLEAIDKNRA…SVQQLKDQVN (63 aa). In terms of domain architecture, PDZ 1 spans 137–224; sequence VFELLKPPSG…TVQLVIARGS (88 aa). S230 carries the post-translational modification Phosphoserine. PDZ domains are found at residues 257 to 337 and 377 to 463; these read TIEL…ARGA and DVEL…MRRG. Position 483 is a phosphoserine (S483). PDZ domains are found at residues 553–634 and 700–786; these read VAHV…CRRT and HIEL…VAKP. A phosphoserine mark is found at S790 and S1078. A PDZ 6 domain is found at 1008 to 1089; the sequence is TINIAKGNSS…IGPDIKITYV (82 aa). Positions 1121 to 1140 are disordered; sequence DIPELPEREEGEGEESELQN. The region spanning 1151 to 1243 is the PDZ 7 domain; the sequence is RVELWREPSK…PVVFMVQSII (93 aa). R1170 carries the omega-N-methylarginine modification. Residues 1278-1324 form a disordered region; it reads ADKAPSQSESEPEKAPLCSVPPPPPSAFAEMGSDHTQSSASKISQDV. Positions 1311–1321 are enriched in polar residues; sequence DHTQSSASKIS. PDZ domains lie at 1350–1433 and 1483–1564; these read MIEL…IRNK and HLEL…HAEN. The interval 1567 to 1612 is disordered; the sequence is SQAVPSAAGAASGEKKNSSQSLMVPQSGSPEPESIRNTSRSSTPAI. Residues 1584–1610 show a composition bias toward polar residues; the sequence is SSQSLMVPQSGSPEPESIRNTSRSSTP. PDZ domains lie at 1629 to 1712 and 1725 to 1807; these read TIEI…YRDE and TIEL…GRIK. 2 positions are modified to phosphoserine: S1818 and S1824. 2 consecutive PDZ domains span residues 1862 to 1948 and 1987 to 2070; these read TVEM…VAGG and SITL…MVLS.

As to quaternary structure, interacts with CLDN5, DLG4, GRIN1, F11R/JAM, CLDN1, NG2, CRB1, MPP4 and PALS1. Interacts with HTR2A, HTR2B, HTR2C, PLEKHA1/TAPP1, PLEKHA2/TAPP2, CXADR, SYNGAP1, CAMK2A and CAMK2B. Interacts with FAT4 (via cytoplasmic domain). Interacts with DLL1. In terms of assembly, (Microbial infection) Interacts with human adenovirus type 9 E4-ORF1 protein. (Microbial infection) Interacts with human papillomavirus 18/HPV18 protein E6. As to expression, expressed in heart, brain, placenta, liver, skeletal muscle, kidney and pancreas.

It is found in the cell membrane. The protein resides in the apical cell membrane. It localises to the postsynaptic density. The protein localises to the cell projection. Its subcellular location is the dendrite. It is found in the cell junction. The protein resides in the tight junction. It localises to the synapse. The protein localises to the synaptosome. Member of the NMDAR signaling complex that may play a role in control of AMPAR potentiation and synaptic plasticity in excitatory synapses. Promotes clustering of HT2RC at the cell surface. In Homo sapiens (Human), this protein is Multiple PDZ domain protein (MPDZ).